A 571-amino-acid chain; its full sequence is Proline--tRNA ligase (571 aa).

This sequence belongs to the class-II aminoacyl-tRNA synthetase family. ProS type 1 subfamily. Homodimer.

The protein resides in the cytoplasm. The enzyme catalyses tRNA(Pro) + L-proline + ATP = L-prolyl-tRNA(Pro) + AMP + diphosphate. Its function is as follows. Catalyzes the attachment of proline to tRNA(Pro) in a two-step reaction: proline is first activated by ATP to form Pro-AMP and then transferred to the acceptor end of tRNA(Pro). As ProRS can inadvertently accommodate and process non-cognate amino acids such as alanine and cysteine, to avoid such errors it has two additional distinct editing activities against alanine. One activity is designated as 'pretransfer' editing and involves the tRNA(Pro)-independent hydrolysis of activated Ala-AMP. The other activity is designated 'posttransfer' editing and involves deacylation of mischarged Ala-tRNA(Pro). The misacylated Cys-tRNA(Pro) is not edited by ProRS. The protein is Proline--tRNA ligase of Proteus mirabilis (strain HI4320).